The sequence spans 222 residues: Large ribosomal subunit protein uL1 (222 aa).

This sequence belongs to the universal ribosomal protein uL1 family. Part of the 50S ribosomal subunit.

Its function is as follows. Binds directly to 23S rRNA. Probably involved in E site tRNA release. Protein L1 is also a translational repressor protein, it controls the translation of its operon by binding to its mRNA. This chain is Large ribosomal subunit protein uL1, found in Pyrobaculum arsenaticum (strain DSM 13514 / JCM 11321 / PZ6).